A 323-amino-acid polypeptide reads, in one-letter code: SURF1-like protein (323 aa).

Over residues 57–71 (DAPKSRENREKDGGK) the composition is skewed to basic and acidic residues. Residues 57-76 (DAPKSRENREKDGGKSKKSK) are disordered. 2 consecutive transmembrane segments (helical) span residues 81 to 101 (WSTG…LGIW) and 299 to 319 (HLNY…MWIH).

This sequence belongs to the SURF1 family.

The protein resides in the mitochondrion inner membrane. Probably involved in the biogenesis of the COX complex. This chain is SURF1-like protein (sft-1), found in Caenorhabditis elegans.